The primary structure comprises 164 residues: HTH-type transcriptional regulator IscR (164 aa).

The region spanning 2–131 (RLTSKGRYAV…NNITLAELVN (130 aa)) is the HTH rrf2-type domain. The H-T-H motif DNA-binding region spans 28–51 (LADISERQGISLSYLEQLFSRLRK). [2Fe-2S] cluster contacts are provided by C92, C98, and C104. A metal cation contacts are provided by C92, C98, and C104. The tract at residues 145–164 (DTRRTANGRPQETINVNLRA) is disordered. Over residues 152-164 (GRPQETINVNLRA) the composition is skewed to polar residues.

It depends on [2Fe-2S] cluster as a cofactor.

Its function is as follows. Regulates the transcription of several operons and genes involved in the biogenesis of Fe-S clusters and Fe-S-containing proteins. In Serratia proteamaculans (strain 568), this protein is HTH-type transcriptional regulator IscR.